The sequence spans 674 residues: DNA ligase (674 aa).

Residues 34 to 38 (DAEYD), 84 to 85 (SL), and Glu-116 each bind NAD(+). Lys-118 acts as the N6-AMP-lysine intermediate in catalysis. The NAD(+) site is built by Arg-139, Glu-174, Lys-291, and Lys-315. The Zn(2+) site is built by Cys-409, Cys-412, Cys-425, and Cys-430. A BRCT domain is found at 586 to 674 (RGEEALKGLT…TGKPVETLAS (89 aa)).

Belongs to the NAD-dependent DNA ligase family. LigA subfamily. Requires Mg(2+) as cofactor. It depends on Mn(2+) as a cofactor.

It carries out the reaction NAD(+) + (deoxyribonucleotide)n-3'-hydroxyl + 5'-phospho-(deoxyribonucleotide)m = (deoxyribonucleotide)n+m + AMP + beta-nicotinamide D-nucleotide.. Its function is as follows. DNA ligase that catalyzes the formation of phosphodiester linkages between 5'-phosphoryl and 3'-hydroxyl groups in double-stranded DNA using NAD as a coenzyme and as the energy source for the reaction. It is essential for DNA replication and repair of damaged DNA. The polypeptide is DNA ligase (Thermus scotoductus).